The sequence spans 68 residues: Putative membrane protein insertion efficiency factor (68 aa).

The protein belongs to the UPF0161 family.

Its subcellular location is the cell membrane. In terms of biological role, could be involved in insertion of integral membrane proteins into the membrane. This chain is Putative membrane protein insertion efficiency factor, found in Syntrophomonas wolfei subsp. wolfei (strain DSM 2245B / Goettingen).